Consider the following 363-residue polypeptide: Ribosomal RNA large subunit methyltransferase M (363 aa).

S-adenosyl-L-methionine is bound by residues Ser-194, 227–230 (CPGG), Asp-246, Asp-266, and Asp-284. The active-site Proton acceptor is the Lys-313.

This sequence belongs to the class I-like SAM-binding methyltransferase superfamily. RNA methyltransferase RlmE family. RlmM subfamily. As to quaternary structure, monomer.

It localises to the cytoplasm. The catalysed reaction is cytidine(2498) in 23S rRNA + S-adenosyl-L-methionine = 2'-O-methylcytidine(2498) in 23S rRNA + S-adenosyl-L-homocysteine + H(+). In terms of biological role, catalyzes the 2'-O-methylation at nucleotide C2498 in 23S rRNA. The sequence is that of Ribosomal RNA large subunit methyltransferase M from Haemophilus influenzae (strain ATCC 51907 / DSM 11121 / KW20 / Rd).